Here is a 1066-residue protein sequence, read N- to C-terminus: Thyrotropin-releasing hormone-degrading ectoenzyme (1066 aa).

The segment covering 1–14 has biased composition (basic and acidic residues); the sequence is MALDGERGEQEEEK. Residues 1–43 form a disordered region; sequence MALDGERGEQEEEKKKKKKKKKRKKKEEEGAEKSSSPFAATMG. The Cytoplasmic portion of the chain corresponds to 1 to 81; the sequence is MALDGERGEQ…ERHIAVHKRL (81 aa). A compositionally biased stretch (basic residues) spans 15–25; it reads KKKKKKKKRKK. Position 71 is a phosphothreonine; by PKC (Thr71). A helical; Signal-anchor for type II membrane protein transmembrane segment spans residues 82–102; it reads VLAFAVSIVALLAVTMLAVLL. At 103 to 1066 the chain is on the extracellular side; that stretch reads SLRFDECGAS…FQWLGKAMRH (964 aa). The disordered stretch occupies residues 118–176; it reads TDGGLGGFPERDSNSSFPGSARRNHHAGGESSQRESGEVGTPGTPSAQPPSEEEREQWQ. N-linked (GlcNAc...) asparagine glycosylation is found at Asn131, Asn202, Asn217, Asn264, and Asn380. 446-450 is a substrate binding site; it reads AAMEN. His482 serves as a coordination point for Zn(2+). The active-site Proton acceptor is the Glu483. Zn(2+) is bound by residues His486 and Glu505. N-linked (GlcNAc...) asparagine glycans are attached at residues Asn647, Asn676, Asn691, Asn705, Asn726, Asn842, and Asn948.

Belongs to the peptidase M1 family. Homodimer; disulfide-linked. Requires Zn(2+) as cofactor.

It localises to the membrane. The catalysed reaction is Release of the N-terminal pyroglutamyl group from pGlu-|-His-Xaa tripeptides and pGlu-|-His-Xaa-Gly tetrapeptides.. In terms of biological role, specific inactivation of TRH after its release. The sequence is that of Thyrotropin-releasing hormone-degrading ectoenzyme (Trhde) from Mus musculus (Mouse).